A 657-amino-acid polypeptide reads, in one-letter code: Single-minded homolog 2 (657 aa).

The bHLH domain occupies 1 to 53 (MKEKSKNAAKTRREKENGEFYELAKLLPLPSAITSQLDKASIIRLTTSYLKMR). PAS domains lie at 77 to 147 (AKEL…PPLH) and 218 to 288 (PPSA…LVKG). The region spanning 218–288 (PPSAITEIKL…YAHHLLLVKG (71 aa)) is the PAC domain. Residues 336–657 (EYKELQLSLD…GASVIITNGR (322 aa)) form the Single-minded C-terminal domain. Residues 354–364 (ESWRTTLSTSQ) are compositionally biased toward polar residues. Disordered regions lie at residues 354 to 387 (ESWR…NPYP) and 612 to 641 (LGSA…APGA). Positions 367–386 (RKSAKPKNTKMKTKLRTNPY) match the Nuclear localization signal motif. Positions 369–381 (SAKPKNTKMKTKL) are enriched in basic residues.

In terms of assembly, efficient DNA binding requires dimerization with another bHLH protein. Heterodimer of SIM2 and ARNT. Transcripts were detected in high levels in kidney followed by skeletal muscle and lung. Low levels were found in testis, brain and heart. In early fetal development it is found in CNS, developing kidney, tongue epithelium and cartilage primordia.

It localises to the nucleus. Transcription factor that may be a master gene of CNS development in cooperation with Arnt. It may have pleiotropic effects in the tissues expressed during development. The polypeptide is Single-minded homolog 2 (Sim2) (Mus musculus (Mouse)).